Here is a 157-residue protein sequence, read N- to C-terminus: Crossover junction endodeoxyribonuclease RuvC (157 aa).

Residues D7, E67, and D140 contribute to the active site. Positions 7, 67, and 140 each coordinate Mg(2+).

It belongs to the RuvC family. In terms of assembly, homodimer which binds Holliday junction (HJ) DNA. The HJ becomes 2-fold symmetrical on binding to RuvC with unstacked arms; it has a different conformation from HJ DNA in complex with RuvA. In the full resolvosome a probable DNA-RuvA(4)-RuvB(12)-RuvC(2) complex forms which resolves the HJ. Mg(2+) is required as a cofactor.

The protein resides in the cytoplasm. The catalysed reaction is Endonucleolytic cleavage at a junction such as a reciprocal single-stranded crossover between two homologous DNA duplexes (Holliday junction).. Its function is as follows. The RuvA-RuvB-RuvC complex processes Holliday junction (HJ) DNA during genetic recombination and DNA repair. Endonuclease that resolves HJ intermediates. Cleaves cruciform DNA by making single-stranded nicks across the HJ at symmetrical positions within the homologous arms, yielding a 5'-phosphate and a 3'-hydroxyl group; requires a central core of homology in the junction. The consensus cleavage sequence is 5'-(A/T)TT(C/G)-3'. Cleavage occurs on the 3'-side of the TT dinucleotide at the point of strand exchange. HJ branch migration catalyzed by RuvA-RuvB allows RuvC to scan DNA until it finds its consensus sequence, where it cleaves and resolves the cruciform DNA. This chain is Crossover junction endodeoxyribonuclease RuvC, found in Rickettsia prowazekii (strain Madrid E).